Here is a 1367-residue protein sequence, read N- to C-terminus: Mediator of RNA polymerase II transcription subunit 23 (1367 aa).

A disordered region spans residues 1343–1367 (PPQALNSGSPAPQSNQVPASLPVTQ). Residues 1346–1367 (ALNSGSPAPQSNQVPASLPVTQ) are compositionally biased toward polar residues.

It belongs to the Mediator complex subunit 23 family. Component of the Mediator complex, which is composed of MED1, MED4, MED6, MED7, MED8, MED9, MED10, MED11, MED12, MED13, MED13L, MED14, MED15, MED16, MED17, MED18, MED19, MED20, MED21, MED22, MED23, MED24, MED25, MED26, MED27, MED29, MED30, MED31, CCNC, CDK8 and CDC2L6/CDK11. The MED12, MED13, CCNC and CDK8 subunits form a distinct module termed the CDK8 module. Mediator containing the CDK8 module is less active than Mediator lacking this module in supporting transcriptional activation. Individual preparations of the Mediator complex lacking one or more distinct subunits have been variously termed ARC, CRSP, DRIP, PC2, SMCC and TRAP. Interacts with CEBPB (when not methylated), CTNNB1, and GLI3. Interacts with CDK8 and ELK1.

Its subcellular location is the nucleus. Functionally, component of the Mediator complex, a coactivator involved in the regulated transcription of nearly all RNA polymerase II-dependent genes. Mediator functions as a bridge to convey information from gene-specific regulatory proteins to the basal RNA polymerase II transcription machinery. Mediator is recruited to promoters by direct interactions with regulatory proteins and serves as a scaffold for the assembly of a functional pre-initiation complex with RNA polymerase II and the general transcription factors. Also required for transcriptional activation subsequent to the assembly of the pre-initiation complex. Required for transcriptional activation by adenovirus E1A protein. Required for ELK1-dependent transcriptional activation in response to activated Ras signaling. This chain is Mediator of RNA polymerase II transcription subunit 23 (Med23), found in Mus musculus (Mouse).